Here is a 459-residue protein sequence, read N- to C-terminus: ATP synthase subunit beta (459 aa).

Residue 148–155 (GGAGVGKT) participates in ATP binding.

The protein belongs to the ATPase alpha/beta chains family. F-type ATPases have 2 components, CF(1) - the catalytic core - and CF(0) - the membrane proton channel. CF(1) has five subunits: alpha(3), beta(3), gamma(1), delta(1), epsilon(1). CF(0) has three main subunits: a(1), b(2) and c(9-12). The alpha and beta chains form an alternating ring which encloses part of the gamma chain. CF(1) is attached to CF(0) by a central stalk formed by the gamma and epsilon chains, while a peripheral stalk is formed by the delta and b chains.

The protein resides in the cell inner membrane. It catalyses the reaction ATP + H2O + 4 H(+)(in) = ADP + phosphate + 5 H(+)(out). Its function is as follows. Produces ATP from ADP in the presence of a proton gradient across the membrane. The catalytic sites are hosted primarily by the beta subunits. In Thioalkalivibrio sulfidiphilus (strain HL-EbGR7), this protein is ATP synthase subunit beta.